The primary structure comprises 122 residues: Large ribosomal subunit protein uL14 (122 aa).

The protein belongs to the universal ribosomal protein uL14 family. As to quaternary structure, part of the 50S ribosomal subunit. Forms a cluster with proteins L3 and L19. In the 70S ribosome, L14 and L19 interact and together make contacts with the 16S rRNA in bridges B5 and B8.

Its function is as follows. Binds to 23S rRNA. Forms part of two intersubunit bridges in the 70S ribosome. The polypeptide is Large ribosomal subunit protein uL14 (Acetivibrio thermocellus (strain ATCC 27405 / DSM 1237 / JCM 9322 / NBRC 103400 / NCIMB 10682 / NRRL B-4536 / VPI 7372) (Clostridium thermocellum)).